The sequence spans 484 residues: ATP synthase subunit beta (484 aa).

Positions 104-123 (ERGPIGSKQTMPIHADAPPF) are disordered. 156 to 163 (GGAGVGKT) contacts ATP.

This sequence belongs to the ATPase alpha/beta chains family. As to quaternary structure, F-type ATPases have 2 components, CF(1) - the catalytic core - and CF(0) - the membrane proton channel. CF(1) has five subunits: alpha(3), beta(3), gamma(1), delta(1), epsilon(1). CF(0) has three main subunits: a(1), b(2) and c(9-12). The alpha and beta chains form an alternating ring which encloses part of the gamma chain. CF(1) is attached to CF(0) by a central stalk formed by the gamma and epsilon chains, while a peripheral stalk is formed by the delta and b chains.

Its subcellular location is the cell inner membrane. The catalysed reaction is ATP + H2O + 4 H(+)(in) = ADP + phosphate + 5 H(+)(out). Its function is as follows. Produces ATP from ADP in the presence of a proton gradient across the membrane. The catalytic sites are hosted primarily by the beta subunits. In Zymomonas mobilis subsp. mobilis (strain ATCC 31821 / ZM4 / CP4), this protein is ATP synthase subunit beta.